We begin with the raw amino-acid sequence, 186 residues long: Ribosome-recycling factor (186 aa).

This sequence belongs to the RRF family.

Its subcellular location is the cytoplasm. In terms of biological role, responsible for the release of ribosomes from messenger RNA at the termination of protein biosynthesis. May increase the efficiency of translation by recycling ribosomes from one round of translation to another. The polypeptide is Ribosome-recycling factor (Burkholderia mallei (strain NCTC 10247)).